We begin with the raw amino-acid sequence, 257 residues long: uncharacterized protein (257 aa).

Transmembrane regions (helical) follow at residues 5 to 25, 29 to 49, 53 to 73, 146 to 166, 180 to 200, and 216 to 236; these read FLYF…IVTF, LALV…GTLI, TLSF…GDWI, LGCI…GIAI, IQFL…WKLW, and VNLC…MIYI.

It belongs to the DedA family.

It localises to the cell membrane. This is an uncharacterized protein from Buchnera aphidicola subsp. Baizongia pistaciae (strain Bp).